The following is a 338-amino-acid chain: tRNA-specific 2-thiouridylase MnmA (338 aa).

Residues 6–13 (AMSGGVDS) and Met32 contribute to the ATP site. Catalysis depends on Cys92, which acts as the Nucleophile. Cys92 and Cys186 are joined by a disulfide. An ATP-binding site is contributed by Gly116. An interaction with tRNA region spans residues 134–136 (KDQ). The active-site Cysteine persulfide intermediate is Cys186. The tract at residues 288 to 289 (RY) is interaction with tRNA.

The protein belongs to the MnmA/TRMU family.

It is found in the cytoplasm. The catalysed reaction is S-sulfanyl-L-cysteinyl-[protein] + uridine(34) in tRNA + AH2 + ATP = 2-thiouridine(34) in tRNA + L-cysteinyl-[protein] + A + AMP + diphosphate + H(+). In terms of biological role, catalyzes the 2-thiolation of uridine at the wobble position (U34) of tRNA, leading to the formation of s(2)U34. In Campylobacter jejuni subsp. jejuni serotype O:6 (strain 81116 / NCTC 11828), this protein is tRNA-specific 2-thiouridylase MnmA.